The primary structure comprises 364 residues: tRNA/tmRNA (uracil-C(5))-methyltransferase (364 aa).

S-adenosyl-L-methionine contacts are provided by Q186, Y214, N219, E235, and D295. C320 serves as the catalytic Nucleophile. The active-site Proton acceptor is E354.

This sequence belongs to the class I-like SAM-binding methyltransferase superfamily. RNA M5U methyltransferase family. TrmA subfamily.

It carries out the reaction uridine(54) in tRNA + S-adenosyl-L-methionine = 5-methyluridine(54) in tRNA + S-adenosyl-L-homocysteine + H(+). The catalysed reaction is uridine(341) in tmRNA + S-adenosyl-L-methionine = 5-methyluridine(341) in tmRNA + S-adenosyl-L-homocysteine + H(+). Dual-specificity methyltransferase that catalyzes the formation of 5-methyluridine at position 54 (m5U54) in all tRNAs, and that of position 341 (m5U341) in tmRNA (transfer-mRNA). This is tRNA/tmRNA (uracil-C(5))-methyltransferase from Azoarcus sp. (strain BH72).